Here is a 239-residue protein sequence, read N- to C-terminus: Ribonuclease PH (239 aa).

Residues Arg-86 and 124–126 (GTR) each bind phosphate.

This sequence belongs to the RNase PH family. In terms of assembly, homohexameric ring arranged as a trimer of dimers.

It carries out the reaction tRNA(n+1) + phosphate = tRNA(n) + a ribonucleoside 5'-diphosphate. Phosphorolytic 3'-5' exoribonuclease that plays an important role in tRNA 3'-end maturation. Removes nucleotide residues following the 3'-CCA terminus of tRNAs; can also add nucleotides to the ends of RNA molecules by using nucleoside diphosphates as substrates, but this may not be physiologically important. Probably plays a role in initiation of 16S rRNA degradation (leading to ribosome degradation) during starvation. This Cupriavidus taiwanensis (strain DSM 17343 / BCRC 17206 / CCUG 44338 / CIP 107171 / LMG 19424 / R1) (Ralstonia taiwanensis (strain LMG 19424)) protein is Ribonuclease PH.